The chain runs to 523 residues: Volkensin (523 aa).

Residues Y74, Y113, E162, and R165 contribute to the active site. G111 to Y113 lines the AMP pocket. Disulfide bonds link C245–C269 and C285–C304. Positions Q251 to N265 are cleaved as a propeptide — linker peptide. Residues P270–T397 enclose the Ricin B-type lectin 1 domain. A carbohydrate contacts are provided by residues D287–E291, Q300, K305, and N311. C328 and C343 are joined by a disulfide. The a carbohydrate site is built by N358 and N398. N358 and N398 each carry an N-linked (GlcNAc...) asparagine glycan. The region spanning T400–L523 is the Ricin B-type lectin 2 domain. Intrachain disulfides connect C414/C427 and C453/C471.

In the N-terminal section; belongs to the ribosome-inactivating protein family. Type 2 RIP subfamily. As to quaternary structure, disulfide-linked dimer of A and B chains. In terms of processing, N-glycosylated. Contains mannose and galactose. As to expression, expressed in roots (at protein level). Expressed in seeds (at protein level).

It catalyses the reaction Endohydrolysis of the N-glycosidic bond at one specific adenosine on the 28S rRNA.. Its activity is regulated as follows. Hemagglutinating activity is inhibited by galactose and structurally related sugars. Its function is as follows. Has N-glycosidase activity and is responsible for inhibiting protein synthesis through the catalytic inactivation of 60S ribosomal subunits by removing a specific adenine of 28S rRNA. Inhibits GTP-dependent binding of EF2 (elongation factor 2) to ribosomes. Binds to cell receptors and probably facilitates the entry into the cell of the A chain. Also acts as a galactose-specific lectin responsible for cell agglutination. This Adenia volkensii (Kilyambiti plant) protein is Volkensin.